The following is a 367-amino-acid chain: Secondary metabolism regulator laeA (367 aa).

The tract at residues Met1 to Asn82 is disordered. Polar residues predominate over residues Leu19–Met41. Basic and acidic residues-rich tracts occupy residues Thr47–Pro56 and Lys71–Asn82.

It belongs to the methyltransferase superfamily. LaeA methyltransferase family. In terms of assembly, component of the heterotrimeric velvet complex composed of laeA, veA and velB; VeA acting as a bridging protein between laeA and velB.

Its subcellular location is the nucleus. The catalysed reaction is L-methionyl-[protein] + S-adenosyl-L-methionine = S-methyl-L-methionyl-[protein] + S-adenosyl-L-homocysteine. Functionally, methyltransferase that performs automethylation. No other methyl-accepting substrate has been identified yet. Component of the velvet transcription factor complex that acts as a global regulator for secondary metabolite gene expression. Controls the expression of the monacolin K gene clusters. Also regulates pigmentation. The polypeptide is Secondary metabolism regulator laeA (Monascus pilosus (Red mold)).